The sequence spans 55 residues: MSTSRKLKSHGMRRGKNRAPHKGVKRGGSKRKYRKGSLKSRKRCDDANRNYRSHL.

Positions 1–42 (MSTSRKLKSHGMRRGKNRAPHKGVKRGGSKRKYRKGSLKSRK) are enriched in basic residues. Residues 1–55 (MSTSRKLKSHGMRRGKNRAPHKGVKRGGSKRKYRKGSLKSRKRCDDANRNYRSHL) are disordered. Phosphoserine occurs at positions 9, 37, and 40.

Belongs to the nuclear transition protein 1 family. In terms of tissue distribution, testis.

It localises to the nucleus. It is found in the chromosome. In terms of biological role, plays a key role in the replacement of histones to protamine in the elongating spermatids of mammals. In condensing spermatids, loaded onto the nucleosomes, where it promotes the recruitment and processing of protamines, which are responsible for histone eviction. The protein is Spermatid nuclear transition protein 1 (TNP1) of Sus scrofa (Pig).